A 153-amino-acid chain; its full sequence is Lipoprotein signal peptidase (153 aa).

A run of 3 helical transmembrane segments spans residues 6 to 26 (IVAV…SYIV), 60 to 80 (QQLL…WYLH), and 85 to 105 (DSFW…GNFI). Active-site residues include aspartate 115 and aspartate 131. A helical membrane pass occupies residues 124 to 144 (FAIFNVADSYLTVGVIILLIA).

The protein belongs to the peptidase A8 family.

The protein localises to the cell membrane. The enzyme catalyses Release of signal peptides from bacterial membrane prolipoproteins. Hydrolyzes -Xaa-Yaa-Zaa-|-(S,diacylglyceryl)Cys-, in which Xaa is hydrophobic (preferably Leu), and Yaa (Ala or Ser) and Zaa (Gly or Ala) have small, neutral side chains.. It functions in the pathway protein modification; lipoprotein biosynthesis (signal peptide cleavage). Functionally, this protein specifically catalyzes the removal of signal peptides from prolipoproteins. The chain is Lipoprotein signal peptidase from Streptococcus pneumoniae (strain ATCC BAA-255 / R6).